Consider the following 178-residue polypeptide: ATP-dependent protease subunit HslV (178 aa).

Thr5 is a catalytic residue. Ala160, Cys163, and Thr166 together coordinate Na(+).

The protein belongs to the peptidase T1B family. HslV subfamily. As to quaternary structure, a double ring-shaped homohexamer of HslV is capped on each side by a ring-shaped HslU homohexamer. The assembly of the HslU/HslV complex is dependent on binding of ATP.

The protein localises to the cytoplasm. The enzyme catalyses ATP-dependent cleavage of peptide bonds with broad specificity.. Its activity is regulated as follows. Allosterically activated by HslU binding. Its function is as follows. Protease subunit of a proteasome-like degradation complex believed to be a general protein degrading machinery. The sequence is that of ATP-dependent protease subunit HslV from Magnetococcus marinus (strain ATCC BAA-1437 / JCM 17883 / MC-1).